A 349-amino-acid chain; its full sequence is Ion-translocating oxidoreductase complex subunit D (349 aa).

The next 3 helical transmembrane spans lie at Val20–Gly42, Ser77–Val99, and Ala124–Ala144. Thr185 is subject to FMN phosphoryl threonine. The next 5 membrane-spanning stretches (helical) occupy residues Ser212–Leu232, Trp239–Leu259, Ala265–Thr285, Ala291–Ile311, and Gly315–Ile335.

It belongs to the NqrB/RnfD family. In terms of assembly, the complex is composed of six subunits: RnfA, RnfB, RnfC, RnfD, RnfE and RnfG. It depends on FMN as a cofactor.

Its subcellular location is the cell inner membrane. Functionally, part of a membrane-bound complex that couples electron transfer with translocation of ions across the membrane. In Shewanella baltica (strain OS185), this protein is Ion-translocating oxidoreductase complex subunit D.